A 350-amino-acid chain; its full sequence is Probable nicotinate-nucleotide adenylyltransferase/Ap4A hydrolase (350 aa).

Residues 1 to 187 are naMN adenylyltransferase; it reads MKQKIIIFGG…YINTNHLYLI (187 aa). An ap4A hydrolase region spans residues 196 to 350; the sequence is DKRFQHCLRV…LKYVQNLVKD (155 aa). Residues 198-310 form the HD domain; sequence RFQHCLRVGK…VYLADKLEPN (113 aa). H201 contributes to the ADP binding site. Fe cation is bound by residues H201, H230, and D231. Residues 231–234, H261, 287–288, D305, and R311 contribute to the ADP site; these read DLAK and HT. D305 contacts Fe cation.

This sequence in the N-terminal section; belongs to the NadD family. It in the C-terminal section; belongs to the Ap4A hydrolase YqeK family.

It catalyses the reaction nicotinate beta-D-ribonucleotide + ATP + H(+) = deamido-NAD(+) + diphosphate. The enzyme catalyses P(1),P(4)-bis(5'-adenosyl) tetraphosphate + H2O = 2 ADP + 2 H(+). The protein operates within cofactor biosynthesis; NAD(+) biosynthesis; deamido-NAD(+) from nicotinate D-ribonucleotide: step 1/1. Its function is as follows. Catalyzes the reversible adenylation of nicotinate mononucleotide (NaMN) to nicotinic acid adenine dinucleotide (NaAD). In terms of biological role, hydrolyzes diadenosine 5',5'''-P1,P4-tetraphosphate (Ap4A) to yield ADP. This Mycoplasma genitalium (strain ATCC 33530 / DSM 19775 / NCTC 10195 / G37) (Mycoplasmoides genitalium) protein is Probable nicotinate-nucleotide adenylyltransferase/Ap4A hydrolase.